Reading from the N-terminus, the 307-residue chain is Branched-chain-amino-acid aminotransferase (307 aa).

Residue lysine 160 is modified to N6-(pyridoxal phosphate)lysine.

This sequence belongs to the class-IV pyridoxal-phosphate-dependent aminotransferase family. Requires pyridoxal 5'-phosphate as cofactor.

The enzyme catalyses L-leucine + 2-oxoglutarate = 4-methyl-2-oxopentanoate + L-glutamate. It catalyses the reaction L-isoleucine + 2-oxoglutarate = (S)-3-methyl-2-oxopentanoate + L-glutamate. The catalysed reaction is L-valine + 2-oxoglutarate = 3-methyl-2-oxobutanoate + L-glutamate. It functions in the pathway amino-acid biosynthesis; L-isoleucine biosynthesis; L-isoleucine from 2-oxobutanoate: step 4/4. Its pathway is amino-acid biosynthesis; L-leucine biosynthesis; L-leucine from 3-methyl-2-oxobutanoate: step 4/4. It participates in amino-acid biosynthesis; L-valine biosynthesis; L-valine from pyruvate: step 4/4. Acts on leucine, isoleucine and valine. This chain is Branched-chain-amino-acid aminotransferase (ilvE), found in Pseudomonas aeruginosa (strain ATCC 15692 / DSM 22644 / CIP 104116 / JCM 14847 / LMG 12228 / 1C / PRS 101 / PAO1).